The primary structure comprises 301 residues: Haloalkane dehalogenase (301 aa).

Catalysis depends on Asp123, which acts as the Nucleophile. Asp250 acts as the Proton donor in catalysis. Residue His279 is the Proton acceptor of the active site.

Belongs to the haloalkane dehalogenase family. Type 1 subfamily. As to quaternary structure, monomer.

It catalyses the reaction 1-haloalkane + H2O = a halide anion + a primary alcohol + H(+). In terms of biological role, catalyzes hydrolytic cleavage of carbon-halogen bonds in halogenated aliphatic compounds, leading to the formation of the corresponding primary alcohols, halide ions and protons. In Phenylobacterium zucineum (strain HLK1), this protein is Haloalkane dehalogenase.